A 176-amino-acid chain; its full sequence is Ribosome maturation factor RimM (176 aa).

A PRC barrel domain is found at 93 to 166 (EGEYYHADLI…RVVIEMPGEI (74 aa)).

The protein belongs to the RimM family. Binds ribosomal protein uS19.

It localises to the cytoplasm. Functionally, an accessory protein needed during the final step in the assembly of 30S ribosomal subunit, possibly for assembly of the head region. Essential for efficient processing of 16S rRNA. May be needed both before and after RbfA during the maturation of 16S rRNA. It has affinity for free ribosomal 30S subunits but not for 70S ribosomes. The sequence is that of Ribosome maturation factor RimM from Rhodopseudomonas palustris (strain BisA53).